The sequence spans 582 residues: Regulatory solute carrier protein family 1 member 1 (582 aa).

Disordered regions lie at residues 1-32 (MSSL…ARSV), 56-76 (KASA…LQVL), 143-180 (EKSW…VPQD), 303-325 (VDMS…HGQP), 363-384 (VTCQ…SGRR), 390-409 (LTPS…SESG), 426-452 (ASTS…ESAR), and 483-529 (SEGA…LSTP). The segment covering 16 to 32 (SGQSPEVGSPTSLARSV) has biased composition (polar residues). The segment covering 148 to 179 (PENQTPSPVNGLQQHRETGSVQREAGQQSVPQ) has biased composition (polar residues). A compositionally biased stretch (polar residues) spans 390–408 (LTPSDQYSQGSCHQATSES). Composition is skewed to basic and acidic residues over residues 438 to 452 (SPDR…ESAR) and 490 to 503 (PSEH…DRPE). A UBA domain is found at 536–576 (IFPAADVDRILGAGFTLQEALGALHRVGGNADLALLVLLAK).

Interacts with YRDC. As to expression, expressed in epithelial and subepithelial cells of small intestine.

It is found in the cell membrane. It localises to the nucleus. Its subcellular location is the golgi apparatus. The protein resides in the trans-Golgi network. In terms of biological role, mediates transcriptional and post-transcriptional regulation of SLC5A1. Inhibits a dynamin and PKC-dependent exocytotic pathway of SLC5A1. Also involved in transcriptional regulation of SLC22A2. Exhibits glucose-dependent, short-term inhibition of SLC5A1 and SLC22A2 by inhibiting the release of vesicles from the trans-Golgi network. Regulates the expression of SLC5A1 in a tissue-specific manner and is specifically involved in its regulation in the small intestine. This Mus musculus (Mouse) protein is Regulatory solute carrier protein family 1 member 1 (Rsc1a1).